Consider the following 273-residue polypeptide: Putative phosphoenolpyruvate synthase regulatory protein (273 aa).

153–160 (AVSRAGKT) contacts ADP.

The protein belongs to the pyruvate, phosphate/water dikinase regulatory protein family. PSRP subfamily.

The enzyme catalyses [pyruvate, water dikinase] + ADP = [pyruvate, water dikinase]-phosphate + AMP + H(+). It carries out the reaction [pyruvate, water dikinase]-phosphate + phosphate + H(+) = [pyruvate, water dikinase] + diphosphate. Functionally, bifunctional serine/threonine kinase and phosphorylase involved in the regulation of the phosphoenolpyruvate synthase (PEPS) by catalyzing its phosphorylation/dephosphorylation. The polypeptide is Putative phosphoenolpyruvate synthase regulatory protein (Stenotrophomonas maltophilia (strain K279a)).